A 2617-amino-acid chain; its full sequence is Ubiquitin carboxyl-terminal hydrolase 24 (2617 aa).

The 42-residue stretch at 3-44 (SEEEQHMTTLLCMGFSDPATIRKALRLAKNDINEAVALLTNE) folds into the UBA domain. Residues 45–99 (RPGLDYGGYEPMDSGGPSPGPGGGPRGDSGSDGSGPSRGGSTGGGGGFDPPPAYH) are disordered. Serine 62 and serine 85 each carry phosphoserine. Positions 65–92 (PGGGPRGDSGSDGSGPSRGGSTGGGGGF) are enriched in gly residues. Residue tyrosine 939 is modified to Phosphotyrosine. Disordered regions lie at residues 1030-1056 (KTSG…SGAF) and 1127-1148 (LLSE…QQHQ). Composition is skewed to low complexity over residues 1031 to 1056 (TSGS…SGAF) and 1128 to 1148 (LSET…QQHQ). Serine 1138 and serine 1282 each carry phosphoserine. Positions 1686-2039 (VGLRNGGATC…NAYMLFYQRV (354 aa)) constitute a USP domain. Cysteine 1695 serves as the catalytic Nucleophile. A disordered region spans residues 1920–1942 (QDSSSEVGENGRNMDQGGGGSPR). Serine 1940 carries the phosphoserine modification. Residue histidine 1967 is the Proton acceptor of the active site. A phosphoserine mark is found at serine 2044, serine 2074, and serine 2558. Residues 2060 to 2087 (AEDLSLSAPSSPEISPQSSPRPHRPNND) form a disordered region. Over residues 2066 to 2079 (SAPSSPEISPQSSP) the composition is skewed to low complexity. The residue at position 2562 (threonine 2562) is a Phosphothreonine. Residues 2572 to 2617 (EKEQSGSSNGSESSPANENGERHLQQGSESPMMIGELRSDLDDVDP) are disordered. The span at 2576–2589 (SGSSNGSESSPANE) shows a compositional bias: low complexity. Serine 2601 carries the post-translational modification Phosphoserine. Residues 2608–2617 (LRSDLDDVDP) are compositionally biased toward basic and acidic residues.

The protein belongs to the peptidase C19 family.

The catalysed reaction is Thiol-dependent hydrolysis of ester, thioester, amide, peptide and isopeptide bonds formed by the C-terminal Gly of ubiquitin (a 76-residue protein attached to proteins as an intracellular targeting signal).. Functionally, protease that can remove conjugated ubiquitin from target proteins and polyubiquitin chains. Deubiquitinates DDB2, preventing its proteasomal degradation. The sequence is that of Ubiquitin carboxyl-terminal hydrolase 24 (Usp24) from Mus musculus (Mouse).